The following is a 437-amino-acid chain: Vacuolar protein sorting-associated protein 4A (437 aa).

The MIT domain maps to 2–80; it reads TTSTLQKAID…KDYLRNKEKH (79 aa). Lys8 carries the N6-acetyllysine modification. Residues 15 to 37 are a coiled coil; sequence KATEEDKAKNYEEALRLYQHAVE. A disordered region spans residues 75–106; the sequence is RNKEKHGKKPVKENQSEGKGSDSDSEGDNPEK. Positions 84 to 96 are enriched in basic and acidic residues; that stretch reads PVKENQSEGKGSD. Phosphoserine is present on residues Ser95 and Ser97. 167-174 lines the ATP pocket; that stretch reads GPPGTGKS.

This sequence belongs to the AAA ATPase family. As to quaternary structure, proposed to be monomeric or homodimeric in nucleotide-free form and to oligomerize upon binding to ATP to form two stacked hexameric or heptameric rings with a central pore through which ESCRT-III substrates are translocated in an ATP-dependent manner. Interacts with CHMP1A, CHMP1B, CHMP2A, CHMP2B, CHMP3, CHMP4A, CHMP4B, CHMP4C and CHMP6. Interacts with VPS4B; the interaction suggests a heteromeric assembly with VPS4B. Interacts with SPAST. Interacts with IST1. Interacts with ZFYVE19/ANCHR; leading to retain it at midbody. As to expression, highly expressed in testis and moderately in heart and brain. Not detected in spleen, lung, liver, skeletal muscle or kidney.

The protein localises to the late endosome membrane. It is found in the midbody. Its subcellular location is the cytoplasm. The protein resides in the cytoskeleton. It localises to the spindle. It catalyses the reaction ATP + H2O = ADP + phosphate + H(+). Functionally, involved in late steps of the endosomal multivesicular bodies (MVB) pathway. Recognizes membrane-associated ESCRT-III assemblies and catalyzes their disassembly, possibly in combination with membrane fission. Redistributes the ESCRT-III components to the cytoplasm for further rounds of MVB sorting. MVBs contain intraluminal vesicles (ILVs) that are generated by invagination and scission from the limiting membrane of the endosome and mostly are delivered to lysosomes enabling degradation of membrane proteins, such as stimulated growth factor receptors, lysosomal enzymes and lipids. It is required for proper accomplishment of various processes including the regulation of endosome size, primary cilium organization, mitotic spindle organization and chromosome segregation, and nuclear envelope sealing and spindle disassembly during anaphase. In conjunction with the ESCRT machinery also appears to function in topologically equivalent membrane fission events, such as the terminal stages of cytokinesis. Involved in cytokinesis: retained at the midbody by ZFYVE19/ANCHR and CHMP4C until abscission checkpoint signaling is terminated at late cytokinesis. It is then released following dephosphorylation of CHMP4C, leading to abscission. VPS4A/B are required for the exosomal release of SDCBP, CD63 and syndecan. Critical for normal erythroblast cytokinesis and correct erythropoiesis. The polypeptide is Vacuolar protein sorting-associated protein 4A (Mus musculus (Mouse)).